The primary structure comprises 425 residues: UDP-N-acetylglucosamine 1-carboxyvinyltransferase (425 aa).

Phosphoenolpyruvate is bound at residue 22–23 (KN). Arg93 serves as a coordination point for UDP-N-acetyl-alpha-D-glucosamine. Cys117 (proton donor) is an active-site residue. Cys117 carries the 2-(S-cysteinyl)pyruvic acid O-phosphothioketal modification. Residues 122–126 (RPVDL), 162–165 (KVSV), Asp307, and Ile329 each bind UDP-N-acetyl-alpha-D-glucosamine.

The protein belongs to the EPSP synthase family. MurA subfamily.

Its subcellular location is the cytoplasm. It catalyses the reaction phosphoenolpyruvate + UDP-N-acetyl-alpha-D-glucosamine = UDP-N-acetyl-3-O-(1-carboxyvinyl)-alpha-D-glucosamine + phosphate. It functions in the pathway cell wall biogenesis; peptidoglycan biosynthesis. In terms of biological role, cell wall formation. Adds enolpyruvyl to UDP-N-acetylglucosamine. This chain is UDP-N-acetylglucosamine 1-carboxyvinyltransferase, found in Pasteurella multocida (strain Pm70).